Consider the following 248-residue polypeptide: mRNA-decapping protein OPG122 (248 aa).

Residues 45 to 227 enclose the Nudix hydrolase domain; that stretch reads HKRVSVSAIL…IAKYALDTAK (183 aa). The Nudix box motif lies at 126 to 147; it reads GIPKRGENVPECLSREIKEEVN. A Mg(2+)-binding site is contributed by Glu-132. Residue Glu-141 is the Nucleophile of the active site. Glu-145 is a Mn(2+) binding site. Asp-167 is a Mg(2+) binding site.

Belongs to the Nudix hydrolase family. Requires Mg(2+) as cofactor. Mn(2+) is required as a cofactor.

The protein localises to the host mitochondrion. Decapping enzyme that remove the protective 5'-cap from both host and viral mRNAs to commit transcripts for decay by the cellular exonuclease XRN1. Preferentially targets spliced mRNAs and since all viral genes are intronless, it preferentially targets host over viral transcripts. Acceleration of the turnover of cellular transcripts promotes the shutoff of host protein synthesis and therefore diminish the magnitude of antiviral response. In Bos taurus (Bovine), this protein is mRNA-decapping protein OPG122 (OPG122).